A 515-amino-acid polypeptide reads, in one-letter code: 2-isopropylmalate synthase (515 aa).

One can recognise a Pyruvate carboxyltransferase domain in the interval 5 to 268 (VIIFDTTLRD…VCGIDATQIV (264 aa)). Positions 14, 202, 204, and 239 each coordinate Mn(2+). The regulatory domain stretch occupies residues 394-515 (KFISLSQHSE…QAKLNAQMTP (122 aa)).

It belongs to the alpha-IPM synthase/homocitrate synthase family. LeuA type 1 subfamily. As to quaternary structure, homodimer. Requires Mn(2+) as cofactor.

Its subcellular location is the cytoplasm. The catalysed reaction is 3-methyl-2-oxobutanoate + acetyl-CoA + H2O = (2S)-2-isopropylmalate + CoA + H(+). The protein operates within amino-acid biosynthesis; L-leucine biosynthesis; L-leucine from 3-methyl-2-oxobutanoate: step 1/4. In terms of biological role, catalyzes the condensation of the acetyl group of acetyl-CoA with 3-methyl-2-oxobutanoate (2-ketoisovalerate) to form 3-carboxy-3-hydroxy-4-methylpentanoate (2-isopropylmalate). This is 2-isopropylmalate synthase from Polynucleobacter necessarius subsp. necessarius (strain STIR1).